Consider the following 180-residue polypeptide: ATP-dependent protease subunit HslV (180 aa).

Thr5 is an active-site residue. Gly161, Cys164, and Thr167 together coordinate Na(+).

It belongs to the peptidase T1B family. HslV subfamily. As to quaternary structure, a double ring-shaped homohexamer of HslV is capped on each side by a ring-shaped HslU homohexamer. The assembly of the HslU/HslV complex is dependent on binding of ATP.

The protein localises to the cytoplasm. The catalysed reaction is ATP-dependent cleavage of peptide bonds with broad specificity.. Its activity is regulated as follows. Allosterically activated by HslU binding. Its function is as follows. Protease subunit of a proteasome-like degradation complex believed to be a general protein degrading machinery. The sequence is that of ATP-dependent protease subunit HslV from Campylobacter jejuni subsp. jejuni serotype O:6 (strain 81116 / NCTC 11828).